The primary structure comprises 381 residues: Neutral protease 2 homolog mep20 (381 aa).

The first 19 residues, 1–19, serve as a signal peptide directing secretion; the sequence is MRFTALASAILPLACNVLA. A propeptide spanning residues 20–193 is cleaved from the precursor; that stretch reads LPAKTGEAPK…ASAVKPLDKR (174 aa). Cystine bridges form between cysteine 199–cysteine 271 and cysteine 278–cysteine 296. Histidine 321 lines the Zn(2+) pocket. Glutamate 322 is a catalytic residue. 2 residues coordinate Zn(2+): histidine 325 and aspartate 336.

Belongs to the peptidase M35 family. Requires Zn(2+) as cofactor.

The enzyme catalyses Preferential cleavage of bonds with hydrophobic residues in P1'. Also 3-Asn-|-Gln-4 and 8-Gly-|-Ser-9 bonds in insulin B chain.. Its function is as follows. Secreted metalloproteinase that allows assimilation of proteinaceous substrates. Shows high activities on basic nuclear substrates such as histone and protamine. This chain is Neutral protease 2 homolog mep20 (mep20), found in Aspergillus flavus.